The chain runs to 683 residues: MEDKNIKDDEILDDQNDNQEDVQNQDEEKEIKPKKPKKKVYISDDENAEEIKKRIESLKNKNNNISFRVKPPIFFFLILILMSTLFYFYGNKTALFQEKREISYTQFVTKVKQGDITEIRESQEKLTGIKKVAGKVEVFETNKLTDRLGQDTYLMEISKEKNVNIVVLGTPVSSIITRAIFSFAPLFMLLFFFYFINKKMMGSSGGVIGNPFNIGKGKGKISERPNVKFSDVAGLTEEKEELKEIVEFLKNPARFEKAGARVPKGVLLLGEPGTGKTLLAKAVAGESEAAFFPISGSEFIELYVGVGASRVRELFKDAKKEAPAIIFIDEIDAVGRRRGQNKNGGGGNEEREQTLNQLLVEMDGFDTDQRIIVMAATNRSDVLDPALLRGGRFDRRIEVSRPDVKGRIEILKVHSRNKKLASDVKLEDIAKITPGFVGADLENLLNEAAILAARKNSDEITMEDLDEAVDKVGMGLGQKSKIISKRDKDMLAYHEGGHALAATLIPGANKVHKVTIIPRGDAGGYMMPLPEETLGKTRKQILAEINVLFAGRAGEELMMDDIATGAYSDIKRATELAKLLISSVGMSELGPINYEHSDNGFMLSSDLSNETAREIDLEVRKLLKFKYEETLNLLRDNKETLEKIATLLKEKETVTGSEIRALVSGSSVNEVLELDDEQLEKYY.

Positions 1–43 (MEDKNIKDDEILDDQNDNQEDVQNQDEEKEIKPKKPKKKVYIS) are disordered. Over 1-70 (MEDKNIKDDE…KNNNISFRVK (70 aa)) the chain is Cytoplasmic. Positions 10–28 (EILDDQNDNQEDVQNQDEE) are enriched in acidic residues. Residues 71-91 (PPIFFFLILILMSTLFYFYGN) traverse the membrane as a helical segment. At 92–174 (KTALFQEKRE…IVVLGTPVSS (83 aa)) the chain is on the periplasmic side. Residues 175–195 (IITRAIFSFAPLFMLLFFFYF) traverse the membrane as a helical segment. Over 196 to 683 (INKKMMGSSG…LDDEQLEKYY (488 aa)) the chain is Cytoplasmic. 270 to 277 (GEPGTGKT) lines the ATP pocket. Residue H494 coordinates Zn(2+). E495 is a catalytic residue. H498 and D569 together coordinate Zn(2+).

This sequence in the central section; belongs to the AAA ATPase family. The protein in the C-terminal section; belongs to the peptidase M41 family. Homohexamer. It depends on Zn(2+) as a cofactor.

It localises to the cell inner membrane. Acts as a processive, ATP-dependent zinc metallopeptidase for both cytoplasmic and membrane proteins. Plays a role in the quality control of integral membrane proteins. This chain is ATP-dependent zinc metalloprotease FtsH, found in Streptobacillus moniliformis (strain ATCC 14647 / DSM 12112 / NCTC 10651 / 9901).